The chain runs to 381 residues: Creatine kinase M-type (381 aa).

The Phosphagen kinase N-terminal domain maps to 11–98 (KLKFSAEEEF…FDPVIQDRHG (88 aa)). Residues 99-118 (GYKPTDKHRTDLNHENLKGG) form a disordered region. The Phosphagen kinase C-terminal domain maps to 125 to 367 (YVLSSRVRTG…KLMVEMEKKL (243 aa)). ATP is bound by residues 128 to 132 (SSRVR), H191, R236, R292, 320 to 325 (RGTGGV), and D335.

It belongs to the ATP:guanido phosphotransferase family. In terms of assembly, dimer of identical or non-identical chains, which can be either B (brain type) or M (muscle type). With MM being the major form in skeletal muscle and myocardium, MB existing in myocardium, and BB existing in many tissues, especially brain. As to expression, predominantly found in skeletal muscle, but not in the heart.

The protein resides in the cytoplasm. The enzyme catalyses creatine + ATP = N-phosphocreatine + ADP + H(+). In terms of biological role, reversibly catalyzes the transfer of phosphate between ATP and various phosphogens (e.g. creatine phosphate). Creatine kinase isoenzymes play a central role in energy transduction in tissues with large, fluctuating energy demands, such as skeletal muscle, heart, brain and spermatozoa. This Gallus gallus (Chicken) protein is Creatine kinase M-type.